A 315-amino-acid chain; its full sequence is Dihydroorotate dehydrogenase (fumarate) (315 aa).

Substrate contacts are provided by residues Lys-46, 70–74 (NSMGL), and Asn-130. Position 46–47 (46–47 (KS)) interacts with FMN. Residue Asn-130 participates in FMN binding. Cys-133 acts as the Nucleophile in catalysis. FMN-binding residues include Lys-167 and Ile-195. A substrate-binding site is contributed by 196-197 (NS). Residues Gly-224, 252–253 (GG), and 274–275 (GT) contribute to the FMN site.

Belongs to the dihydroorotate dehydrogenase family. Type 1 subfamily. Homodimer. Requires FMN as cofactor.

Its subcellular location is the cytoplasm. It carries out the reaction (S)-dihydroorotate + fumarate = orotate + succinate. The protein operates within pyrimidine metabolism; UMP biosynthesis via de novo pathway. In terms of biological role, catalyzes the conversion of dihydroorotate to orotate with fumarate as the electron acceptor. The polypeptide is Dihydroorotate dehydrogenase (fumarate) (URA1) (Kluyveromyces lactis (strain ATCC 8585 / CBS 2359 / DSM 70799 / NBRC 1267 / NRRL Y-1140 / WM37) (Yeast)).